The sequence spans 644 residues: Archaeal Lon protease (644 aa).

Positions 1 to 18 (MKTTIKNSRTQESVSYEG) are enriched in polar residues. Residues 1–30 (MKTTIKNSRTQESVSYEGNETKKGTGETLS) form a disordered region. Topologically, residues 1–137 (MKTTIKNSRT…KARSQDEKKN (137 aa)) are cytoplasmic. Residue 71–78 (GEPGVGKS) participates in ATP binding. 2 helical membrane passes run 138-155 (LFMM…FMMN) and 156-171 (QFLA…FLAL). Over 172 to 644 (QQFRPRTTVM…PSIMKKPAMH (473 aa)) the chain is Cytoplasmic. The region spanning 438–617 (GGEVGRVNGL…GDVLEHALIG (180 aa)) is the Lon proteolytic domain. Catalysis depends on residues serine 524 and lysine 567.

It belongs to the peptidase S16 family. Archaeal LonB subfamily. As to quaternary structure, homohexamer. Organized in a ring with a central cavity.

The protein resides in the cell membrane. In terms of biological role, ATP-dependent serine protease that mediates the selective degradation of mutant and abnormal proteins as well as certain short-lived regulatory proteins. Degrades polypeptides processively. The chain is Archaeal Lon protease from Methanothermobacter thermautotrophicus (strain ATCC 29096 / DSM 1053 / JCM 10044 / NBRC 100330 / Delta H) (Methanobacterium thermoautotrophicum).